Here is a 428-residue protein sequence, read N- to C-terminus: GTPase Obg (428 aa).

Positions 1–158 (MFVDQVKIYV…RDVILELKVL (158 aa)) constitute an Obg domain. The region spanning 159–329 (ADVGLVGFPS…LLFEVANLIE (171 aa)) is the OBG-type G domain. GTP-binding positions include 165–172 (GFPSVGKS), 190–194 (FTTIV), 212–215 (DLPG), 282–285 (NKMD), and 310–312 (SAV). Mg(2+) contacts are provided by Ser-172 and Thr-192. An OCT domain is found at 350 to 428 (KFDTEGVKFE…ILEYEFEFID (79 aa)).

Belongs to the TRAFAC class OBG-HflX-like GTPase superfamily. OBG GTPase family. As to quaternary structure, monomer. Mg(2+) serves as cofactor.

The protein resides in the cytoplasm. Its function is as follows. An essential GTPase which binds GTP, GDP and possibly (p)ppGpp with moderate affinity, with high nucleotide exchange rates and a fairly low GTP hydrolysis rate. Plays a role in control of the cell cycle, stress response, ribosome biogenesis and in those bacteria that undergo differentiation, in morphogenesis control. The protein is GTPase Obg of Bacillus cereus (strain B4264).